A 1362-amino-acid chain; its full sequence is DNA-directed RNA polymerase subunit beta (1362 aa).

The protein belongs to the RNA polymerase beta chain family. In terms of assembly, the RNAP catalytic core consists of 2 alpha, 1 beta, 1 beta' and 1 omega subunit. When a sigma factor is associated with the core the holoenzyme is formed, which can initiate transcription.

It carries out the reaction RNA(n) + a ribonucleoside 5'-triphosphate = RNA(n+1) + diphosphate. Its function is as follows. DNA-dependent RNA polymerase catalyzes the transcription of DNA into RNA using the four ribonucleoside triphosphates as substrates. The protein is DNA-directed RNA polymerase subunit beta of Acinetobacter baumannii (strain AB307-0294).